A 380-amino-acid polypeptide reads, in one-letter code: Glucose-1-phosphate adenylyltransferase (380 aa).

Residues glycine 164, 179 to 180 (EK), and serine 190 contribute to the alpha-D-glucose 1-phosphate site.

It belongs to the bacterial/plant glucose-1-phosphate adenylyltransferase family. In terms of assembly, homotetramer.

It catalyses the reaction alpha-D-glucose 1-phosphate + ATP + H(+) = ADP-alpha-D-glucose + diphosphate. It functions in the pathway glycan biosynthesis; glycogen biosynthesis. Functionally, involved in the biosynthesis of ADP-glucose, a building block required for the elongation reactions to produce glycogen. Catalyzes the reaction between ATP and alpha-D-glucose 1-phosphate (G1P) to produce pyrophosphate and ADP-Glc. The protein is Glucose-1-phosphate adenylyltransferase of Streptococcus pneumoniae (strain Hungary19A-6).